A 131-amino-acid chain; its full sequence is Small ribosomal subunit protein uS8 (131 aa).

The protein belongs to the universal ribosomal protein uS8 family. In terms of assembly, part of the 30S ribosomal subunit. Contacts proteins S5 and S12.

Its function is as follows. One of the primary rRNA binding proteins, it binds directly to 16S rRNA central domain where it helps coordinate assembly of the platform of the 30S subunit. The sequence is that of Small ribosomal subunit protein uS8 from Sulfurovum sp. (strain NBC37-1).